Here is a 67-residue protein sequence, read N- to C-terminus: Ferredoxin FdxE (67 aa).

5 residues coordinate [3Fe-4S] cluster: C10, V11, Q15, C16, and C54.

In terms of assembly, interacts with the cytochrome P450 143 with high affinity (Kd=84 nM). [3Fe-4S] cluster serves as cofactor.

Functionally, ferredoxin that is the redox partner of cytochrome CYP143, a cytochrome P450 encoded by an adjacent gene. The protein is Ferredoxin FdxE of Mycobacterium tuberculosis (strain ATCC 25618 / H37Rv).